A 266-amino-acid chain; its full sequence is Integral membrane protein 2B (266 aa).

Over 1-54 the chain is Cytoplasmic; the sequence is MVKVTFNSALAQKEAKKDESKSGEEALIIPPDAVAVDCKDPDEVVPVGQRRAWC. The chain crosses the membrane as a helical; Signal-anchor for type II membrane protein span at residues 55-75; sequence WCMCFGLAFMLAGVILGGAYL. Residues 76–266 are Lumenal-facing; that stretch reads YKYFAFQPDD…RFAVETLICP (191 aa). The interval 102-134 is necessary for interaction with APP and inhibitor effects on APP processing; it reads EPSADAPASRYQTIEENIKIFEEDEVEFISVPV. Residues 137-231 enclose the BRICHOS domain; it reads FADSDPANIV…LCHDKETYKL (95 aa). Intrachain disulfides connect cysteine 164-cysteine 223 and cysteine 248-cysteine 265. Asparagine 170 carries an N-linked (GlcNAc...) asparagine glycan.

It belongs to the ITM2 family. In terms of assembly, homodimer; disulfide-linked. Interacts with SPPL2A and SPPL2B. Interacts with APP. Mature BRI2 (mBRI2) interacts with the APP amyloid-beta A4 protein; the interaction occurs at the cell surface and in the endocytic compartments and enable alpha- and beta-secretase-induced APP cleavage inhibition. Mature BRI2 (mBRI2) interacts with the APP C99; the interaction occurs in the endocytic compartments and enable gamma-secretase-induced C99 cleavage inhibition. May form heterodimers with Bri23 peptide and APP amyloid-beta protein 40. Interacts with ADAM7 in sperm; the interaction increases following capacitation. Post-translationally, the ectodomain C-terminal part of the imBRI2 is processed by furin producing a secreted Bri23 peptide and a mature BRI2, membrane form (mBRI2). The remaining part of the ectodomain of mBRI2 containing the BRICHOS domain is cleaved by ADAM10 and is secreted (BRI2C, soluble form). The membrane-bound N-terminal fragment (BRI2C, membrane form) is further proteolytically processed by SPPL2A and SPPL2B through regulated intramembrane proteolysis producing a secreted C-peptide and a BRI2 intracellular domain (BRI2 ICD) released in the cytosol. Shedding by ADAM10 facilitates intramembrane cleavage but is not absolutely required for BRI2 ICD generation. Glycosylation at Asn-170 is important for cell surface localization, but doesn't affect furin- and ADAM10-induced proteolytic processing.

It is found in the golgi apparatus membrane. Its subcellular location is the cell membrane. The protein localises to the endosome membrane. It localises to the secreted. Functionally, plays a regulatory role in the processing of the amyloid-beta A4 precursor protein (APP) and acts as an inhibitor of the amyloid-beta peptide aggregation and fibrils deposition. Plays a role in the induction of neurite outgrowth. Functions as a protease inhibitor by blocking access of secretases to APP cleavage sites. Its function is as follows. Mature BRI2 (mBRI2) functions as a modulator of the amyloid-beta A4 precursor protein (APP) processing leading to a strong reduction in the secretion of secretase-processed amyloid-beta protein 40 and amyloid-beta protein 42. In terms of biological role, bri23 peptide prevents aggregation of APP amyloid-beta protein 42 into toxic oligomers. This chain is Integral membrane protein 2B (ITM2B), found in Bos taurus (Bovine).